Here is an 81-residue protein sequence, read N- to C-terminus: Delta-actitoxin-Aeq2d (81 aa).

The first 19 residues, 1-19 (MNRLMILVFAAVILALASA), serve as a signal peptide directing secretion. Residues 20 to 25 (DDVDIA) constitute a propeptide that is removed on maturation. Disulfide bonds link cysteine 31/cysteine 78, cysteine 33/cysteine 68, and cysteine 61/cysteine 79.

This sequence belongs to the sea anemone sodium channel inhibitory toxin family. Type I subfamily.

The protein resides in the secreted. Its subcellular location is the nematocyst. In terms of biological role, binds specifically to voltage-gated sodium channels (Nav), thereby delaying their inactivation during signal transduction. Causes death to crabs. The protein is Delta-actitoxin-Aeq2d of Actinia equina (Beadlet anemone).